A 174-amino-acid chain; its full sequence is MEGFTIWLTGPSGAGKTTLAVKLAKKLREMGYKVEILDGDTIRKTLYPNLGFSKEAREMHNRIVIYMAKLLTRNGVIAIVSLISPYKRIREYARKEIGRFMEVYVYAPLEVRIKRDPKGLYAKAIRGEIRGLTGYDGVYEEPENPEVKVDSSRMTPDEEAELVIRKAKELGYLP.

10–17 (GPSGAGKT) serves as a coordination point for ATP. The active-site Phosphoserine intermediate is the serine 84.

The protein belongs to the APS kinase family.

It catalyses the reaction adenosine 5'-phosphosulfate + ATP = 3'-phosphoadenylyl sulfate + ADP + H(+). The protein operates within sulfur metabolism; hydrogen sulfide biosynthesis; sulfite from sulfate: step 2/3. Catalyzes the synthesis of activated sulfate. This Pyrococcus abyssi (strain GE5 / Orsay) protein is Probable adenylyl-sulfate kinase (cysC).